Reading from the N-terminus, the 260-residue chain is Hydroxyethylthiazole kinase 1 (260 aa).

M39 contributes to the substrate binding site. Residues R115 and T160 each contribute to the ATP site. G187 provides a ligand contact to substrate.

The protein belongs to the Thz kinase family. The cofactor is Mg(2+).

It catalyses the reaction 5-(2-hydroxyethyl)-4-methylthiazole + ATP = 4-methyl-5-(2-phosphooxyethyl)-thiazole + ADP + H(+). It participates in cofactor biosynthesis; thiamine diphosphate biosynthesis; 4-methyl-5-(2-phosphoethyl)-thiazole from 5-(2-hydroxyethyl)-4-methylthiazole: step 1/1. Functionally, catalyzes the phosphorylation of the hydroxyl group of 4-methyl-5-beta-hydroxyethylthiazole (THZ). The protein is Hydroxyethylthiazole kinase 1 of Streptococcus pneumoniae (strain ATCC 700669 / Spain 23F-1).